Here is a 100-residue protein sequence, read N- to C-terminus: MAKCLLLLLLVVLSSLLGLPQALECFQCNRVNASGVCETGGSTCQTQGSQQCFLRRIFENGTLSYGHQGCSQLCIPMKLFNPSVIVEYKCCHDSPLCNKF.

Residues Met1 to Ala22 form the signal peptide. The UPAR/Ly6 domain occupies Leu23–Phe100. Intrachain disulfides connect Cys25/Cys52, Cys28/Cys37, Cys44/Cys70, Cys74/Cys90, and Cys91/Cys97. N-linked (GlcNAc...) asparagine glycosylation is present at Asn60.

Post-translationally, glycosylated. Expressed in placenta, where it is detected in both fetal tissues (cotyledon and intercotyledon) and maternal tissues (caruncle and intercaruncular endometrium) (at protein level). Expressed in the mesenchyme area of villi in the cotyledon (at protein level). In endometrium, expressed in the luminal epithelium and weakly in the subluminal stroma (at protein level). Detected in trophoblast mononucleate cells (TMCs) (at protein level). Also detected in trophoblast binucleate cells (BNCs). Overall, expression is strongest in fetal tissue and lower in maternal tissue. Not detected in other tissues tested.

The protein localises to the secreted. Its function is as follows. Binds specifically to type I collagen. The sequence is that of Secreted protein of Ly-6 domain 1 from Bos taurus (Bovine).